Reading from the N-terminus, the 307-residue chain is Ribonuclease Z (307 aa).

Residues histidine 64, histidine 66, aspartate 68, histidine 69, histidine 141, aspartate 209, and histidine 267 each contribute to the Zn(2+) site. Catalysis depends on aspartate 68, which acts as the Proton acceptor.

Belongs to the RNase Z family. Homodimer. It depends on Zn(2+) as a cofactor.

It carries out the reaction Endonucleolytic cleavage of RNA, removing extra 3' nucleotides from tRNA precursor, generating 3' termini of tRNAs. A 3'-hydroxy group is left at the tRNA terminus and a 5'-phosphoryl group is left at the trailer molecule.. Functionally, zinc phosphodiesterase, which displays some tRNA 3'-processing endonuclease activity. Probably involved in tRNA maturation, by removing a 3'-trailer from precursor tRNA. In Thermoplasma acidophilum (strain ATCC 25905 / DSM 1728 / JCM 9062 / NBRC 15155 / AMRC-C165), this protein is Ribonuclease Z.